We begin with the raw amino-acid sequence, 89 residues long: OMEGA-ectatommitoxin(02)-Rm1b (89 aa).

A signal peptide spans methionine 1–glycine 30. Cystine bridges form between cysteine 39–cysteine 52, cysteine 47–cysteine 68, and cysteine 70–cysteine 79. Residues tyrosine 43–glycine 80 form the EGF-like domain.

This sequence belongs to the EGF domain peptide family. In terms of tissue distribution, expressed by the venom gland.

It localises to the secreted. Its function is as follows. Ant peptide with probable defensive activity which acts as a potent agonist of the mammalian epidermal growth factor receptor (EGFR). Mimics, both structurally and functionally, vertebrate epidermal growth factor (EGF) peptide hormones. In vivo, intraplantar injection in mice causes long-lasting (several days) hypersensitivity of the injected paw to both mechanical and thermal stimuli. Its long-lasting effect is unusual for venom toxins whose effects are usually immediate. One possible explanation is that it would reduce the duration of a nest attack, discourage future attacks, or enhance the actions of subsequent exposure to other pain-inducing venom peptides. The sequence is that of OMEGA-ectatommitoxin(02)-Rm1b from Rhytidoponera metallica (Australian green-headed ant).